A 398-amino-acid polypeptide reads, in one-letter code: Phytoene synthase, chloroplastic (398 aa).

The protein belongs to the phytoene/squalene synthase family. As to quaternary structure, monomer.

Its subcellular location is the plastid. It is found in the chloroplast. The catalysed reaction is 2 (2E,6E,10E)-geranylgeranyl diphosphate = 15-cis-phytoene + 2 diphosphate. It participates in carotenoid biosynthesis; phytoene biosynthesis; all-trans-phytoene from geranylgeranyl diphosphate: step 1/1. Functionally, catalyzes the reaction from prephytoene diphosphate to phytoene. In Daucus carota (Wild carrot), this protein is Phytoene synthase, chloroplastic (PSY).